A 292-amino-acid polypeptide reads, in one-letter code: Hypoxia responsive morphology factor A (292 aa).

The Bipartite nuclear localization signal motif lies at 48–70 (RRNGRRRNLEYVAQHRRKIARKI). The interval 156–186 (GKEHYSLHLSTLPAIRNAFGDVIFDAIERSP) is RNA recognition motif (RRM)-like domain.

The protein belongs to the hrmA family.

Its subcellular location is the nucleus. Its function is as follows. Hypoxia responsive morphology factor that modulates the expression of the subtelomeric hrmA-associated cluster (HAC) containing genes that alter the hyphal surface (such as reduced total chitin or increased beta-glucan exposure) and perturb inter-hyphal interactions within the developing biofilms, resulting in a loss of vertically aligned polarized growing filaments. Consequently, this hypoxia-typic morphotype (called H-MORPH) with altered biofilm architecture leads to increased hypoxia fitness, increased host inflammation, rapid disease progression, and mortality in a murine model of invasive aspergillosis. This Aspergillus fumigatus (strain CBS 144.89 / FGSC A1163 / CEA10) (Neosartorya fumigata) protein is Hypoxia responsive morphology factor A.